The sequence spans 54 residues: Large ribosomal subunit protein bL32 (54 aa).

It belongs to the bacterial ribosomal protein bL32 family.

The polypeptide is Large ribosomal subunit protein bL32 (Buchnera aphidicola subsp. Baizongia pistaciae (strain Bp)).